We begin with the raw amino-acid sequence, 396 residues long: Elongation factor Tu (396 aa).

Residues 10-205 form the tr-type G domain; it reads KPHVNIGTIG…ACDESIPDPV (196 aa). The tract at residues 19–26 is G1; the sequence is GHVDHGKT. A GTP-binding site is contributed by 19-26; it reads GHVDHGKT. Thr-26 is a binding site for Mg(2+). The segment at 62–66 is G2; sequence GITIN. Positions 83-86 are G3; it reads DAPG. Residues 83 to 87 and 138 to 141 each bind GTP; these read DAPGH and NKCD. Residues 138 to 141 are G4; it reads NKCD. Residues 175–177 are G5; that stretch reads SAL.

Belongs to the TRAFAC class translation factor GTPase superfamily. Classic translation factor GTPase family. EF-Tu/EF-1A subfamily. Monomer.

The protein resides in the cytoplasm. The catalysed reaction is GTP + H2O = GDP + phosphate + H(+). Functionally, GTP hydrolase that promotes the GTP-dependent binding of aminoacyl-tRNA to the A-site of ribosomes during protein biosynthesis. This is Elongation factor Tu from Corynebacterium kroppenstedtii (strain DSM 44385 / JCM 11950 / CIP 105744 / CCUG 35717).